Reading from the N-terminus, the 341-residue chain is Probable dual-specificity RNA methyltransferase RlmN (341 aa).

Catalysis depends on Glu88, which acts as the Proton acceptor. In terms of domain architecture, Radical SAM core spans 94 to 314 (EGDRATLCIS…ESHGFTCTIR (221 aa)). The cysteines at positions 101 and 325 are disulfide-linked. The [4Fe-4S] cluster site is built by Cys108, Cys112, and Cys115. S-adenosyl-L-methionine-binding positions include 153–154 (GE), Ser185, 206–208 (SLH), and His282. Cys325 acts as the S-methylcysteine intermediate in catalysis.

Belongs to the radical SAM superfamily. RlmN family. [4Fe-4S] cluster is required as a cofactor.

The protein resides in the cytoplasm. It carries out the reaction adenosine(2503) in 23S rRNA + 2 reduced [2Fe-2S]-[ferredoxin] + 2 S-adenosyl-L-methionine = 2-methyladenosine(2503) in 23S rRNA + 5'-deoxyadenosine + L-methionine + 2 oxidized [2Fe-2S]-[ferredoxin] + S-adenosyl-L-homocysteine. The enzyme catalyses adenosine(37) in tRNA + 2 reduced [2Fe-2S]-[ferredoxin] + 2 S-adenosyl-L-methionine = 2-methyladenosine(37) in tRNA + 5'-deoxyadenosine + L-methionine + 2 oxidized [2Fe-2S]-[ferredoxin] + S-adenosyl-L-homocysteine. Its function is as follows. Specifically methylates position 2 of adenine 2503 in 23S rRNA and position 2 of adenine 37 in tRNAs. This chain is Probable dual-specificity RNA methyltransferase RlmN, found in Porphyromonas gingivalis (strain ATCC BAA-308 / W83).